Reading from the N-terminus, the 391-residue chain is 3-ketoacyl-CoA thiolase (391 aa).

Residue Cys95 is the Acyl-thioester intermediate of the active site. Residues His347 and Cys377 each act as proton acceptor in the active site.

Belongs to the thiolase-like superfamily. Thiolase family. In terms of assembly, heterotetramer of two alpha chains (FadB) and two beta chains (FadA).

Its subcellular location is the cytoplasm. The enzyme catalyses an acyl-CoA + acetyl-CoA = a 3-oxoacyl-CoA + CoA. Its pathway is lipid metabolism; fatty acid beta-oxidation. In terms of biological role, catalyzes the final step of fatty acid oxidation in which acetyl-CoA is released and the CoA ester of a fatty acid two carbons shorter is formed. The protein is 3-ketoacyl-CoA thiolase of Pseudomonas putida (strain ATCC 47054 / DSM 6125 / CFBP 8728 / NCIMB 11950 / KT2440).